The following is an 88-amino-acid chain: DNA-directed RNA polymerase subunit omega (88 aa).

Belongs to the RNA polymerase subunit omega family. The RNAP catalytic core consists of 2 alpha, 1 beta, 1 beta' and 1 omega subunit. When a sigma factor is associated with the core the holoenzyme is formed, which can initiate transcription.

It carries out the reaction RNA(n) + a ribonucleoside 5'-triphosphate = RNA(n+1) + diphosphate. Promotes RNA polymerase assembly. Latches the N- and C-terminal regions of the beta' subunit thereby facilitating its interaction with the beta and alpha subunits. The protein is DNA-directed RNA polymerase subunit omega of Haemophilus influenzae (strain 86-028NP).